Consider the following 385-residue polypeptide: 1-deoxy-D-xylulose 5-phosphate reductoisomerase (385 aa).

NADPH is bound by residues Thr-11, Gly-12, Ser-13, Ile-14, Ala-37, Arg-38, Asn-39, and Asn-123. Residue Lys-124 participates in 1-deoxy-D-xylulose 5-phosphate binding. NADPH is bound at residue Glu-125. Asp-149 contacts Mn(2+). 1-deoxy-D-xylulose 5-phosphate-binding residues include Ser-150, Glu-151, Ser-173, and His-196. Position 151 (Glu-151) interacts with Mn(2+). Gly-202 contributes to the NADPH binding site. 4 residues coordinate 1-deoxy-D-xylulose 5-phosphate: Ser-209, Asn-214, Lys-215, and Glu-218. Glu-218 is a Mn(2+) binding site.

This sequence belongs to the DXR family. It depends on Mg(2+) as a cofactor. Requires Mn(2+) as cofactor.

It carries out the reaction 2-C-methyl-D-erythritol 4-phosphate + NADP(+) = 1-deoxy-D-xylulose 5-phosphate + NADPH + H(+). It participates in isoprenoid biosynthesis; isopentenyl diphosphate biosynthesis via DXP pathway; isopentenyl diphosphate from 1-deoxy-D-xylulose 5-phosphate: step 1/6. Catalyzes the NADPH-dependent rearrangement and reduction of 1-deoxy-D-xylulose-5-phosphate (DXP) to 2-C-methyl-D-erythritol 4-phosphate (MEP). The protein is 1-deoxy-D-xylulose 5-phosphate reductoisomerase of Moorella thermoacetica (strain ATCC 39073 / JCM 9320).